A 704-amino-acid polypeptide reads, in one-letter code: Capsule polysaccharide modification protein LipA (704 aa).

It localises to the cell inner membrane. Its function is as follows. Involved in the phospholipid modification of the capsular polysaccharide, a strong requirement for its translocation to the cell surface. This chain is Capsule polysaccharide modification protein LipA (lipA), found in Neisseria meningitidis serogroup A / serotype 4A (strain DSM 15465 / Z2491).